The chain runs to 101 residues: ATP-dependent Clp protease adapter protein ClpS 2 (101 aa).

Belongs to the ClpS family. Binds to the N-terminal domain of the chaperone ClpA.

In terms of biological role, involved in the modulation of the specificity of the ClpAP-mediated ATP-dependent protein degradation. This Mesorhizobium japonicum (strain LMG 29417 / CECT 9101 / MAFF 303099) (Mesorhizobium loti (strain MAFF 303099)) protein is ATP-dependent Clp protease adapter protein ClpS 2.